We begin with the raw amino-acid sequence, 643 residues long: Arginine--tRNA ligase, mitochondrial (643 aa).

The 'HIGH' region signature appears at 188–198; it reads PNIAKPFHAGH.

It belongs to the class-I aminoacyl-tRNA synthetase family.

The protein localises to the mitochondrion matrix. It catalyses the reaction tRNA(Arg) + L-arginine + ATP = L-arginyl-tRNA(Arg) + AMP + diphosphate. The polypeptide is Arginine--tRNA ligase, mitochondrial (MSR1) (Saccharomyces cerevisiae (strain ATCC 204508 / S288c) (Baker's yeast)).